The sequence spans 199 residues: Probable GTP-binding protein EngB (199 aa).

The EngB-type G domain maps to 28 to 199; the sequence is DLPEIALAGR…DSWDAILEQV (172 aa). GTP contacts are provided by residues 36–43, 63–67, 81–84, 148–151, and 180–182; these read GRSNVGKS, GKTQL, DVPG, TKAD, and FSS. 2 residues coordinate Mg(2+): S43 and T65.

It belongs to the TRAFAC class TrmE-Era-EngA-EngB-Septin-like GTPase superfamily. EngB GTPase family. Mg(2+) is required as a cofactor.

Its function is as follows. Necessary for normal cell division and for the maintenance of normal septation. In Streptococcus pyogenes serotype M28 (strain MGAS6180), this protein is Probable GTP-binding protein EngB.